The sequence spans 533 residues: CTP synthase (533 aa).

Residues 1–268 form an amidoligase domain region; sequence MGETKYIFVT…DETILQKMGL (268 aa). Ser15 contacts CTP. Ser15 provides a ligand contact to UTP. 16–21 serves as a coordination point for ATP; that stretch reads SLGKGI. Tyr56 lines the L-glutamine pocket. Residue Asp73 participates in ATP binding. Mg(2+)-binding residues include Asp73 and Glu143. CTP is bound by residues 150–152, 189–194, and Lys225; these read DIE and KTKPTQ. Residues 189–194 and Lys225 contribute to the UTP site; that span reads KTKPTQ. The Glutamine amidotransferase type-1 domain maps to 301–533; sequence YVELQDAYKS…VSFIKAAIDK (233 aa). Gly356 is a binding site for L-glutamine. Cys383 serves as the catalytic Nucleophile; for glutamine hydrolysis. L-glutamine is bound by residues 384 to 387, Glu407, and Arg464; that span reads LGMQ. Catalysis depends on residues His509 and Glu511.

This sequence belongs to the CTP synthase family. As to quaternary structure, homotetramer.

The enzyme catalyses UTP + L-glutamine + ATP + H2O = CTP + L-glutamate + ADP + phosphate + 2 H(+). It carries out the reaction L-glutamine + H2O = L-glutamate + NH4(+). The catalysed reaction is UTP + NH4(+) + ATP = CTP + ADP + phosphate + 2 H(+). Its pathway is pyrimidine metabolism; CTP biosynthesis via de novo pathway; CTP from UDP: step 2/2. With respect to regulation, allosterically activated by GTP, when glutamine is the substrate; GTP has no effect on the reaction when ammonia is the substrate. The allosteric effector GTP functions by stabilizing the protein conformation that binds the tetrahedral intermediate(s) formed during glutamine hydrolysis. Inhibited by the product CTP, via allosteric rather than competitive inhibition. Catalyzes the ATP-dependent amination of UTP to CTP with either L-glutamine or ammonia as the source of nitrogen. Regulates intracellular CTP levels through interactions with the four ribonucleotide triphosphates. This Bacteroides fragilis (strain YCH46) protein is CTP synthase.